The sequence spans 484 residues: ATP synthase subunit beta (484 aa).

Residues 104-123 (ERGPIGSKQTMPIHADAPPF) are disordered. Position 156 to 163 (156 to 163 (GGAGVGKT)) interacts with ATP.

The protein belongs to the ATPase alpha/beta chains family. In terms of assembly, F-type ATPases have 2 components, CF(1) - the catalytic core - and CF(0) - the membrane proton channel. CF(1) has five subunits: alpha(3), beta(3), gamma(1), delta(1), epsilon(1). CF(0) has three main subunits: a(1), b(2) and c(9-12). The alpha and beta chains form an alternating ring which encloses part of the gamma chain. CF(1) is attached to CF(0) by a central stalk formed by the gamma and epsilon chains, while a peripheral stalk is formed by the delta and b chains.

The protein resides in the cell inner membrane. The catalysed reaction is ATP + H2O + 4 H(+)(in) = ADP + phosphate + 5 H(+)(out). Produces ATP from ADP in the presence of a proton gradient across the membrane. The catalytic sites are hosted primarily by the beta subunits. This is ATP synthase subunit beta from Zymomonas mobilis subsp. mobilis (strain ATCC 31821 / ZM4 / CP4).